The following is a 1463-amino-acid chain: Probable ATP-dependent RNA helicase spindle-E (1463 aa).

One can recognise a Helicase ATP-binding domain in the interval 131 to 296 (LKAIRENPVV…FKIPGPNSLF (166 aa)). 144-151 (GMTGCGKT) is a binding site for ATP. Residues 243–246 (DEVH) carry the DEAH box motif. The 184-residue stretch at 348 to 531 (VCDRFIDEFE…NVVLKTKLLD (184 aa)) folds into the Helicase C-terminal domain. Residues 951–1016 (AFKQRDIVAA…QLRGTPLDMF (66 aa)) form the Tudor domain.

Belongs to the DEAD box helicase family. DEAH subfamily.

It is found in the cytoplasm. The enzyme catalyses ATP + H2O = ADP + phosphate + H(+). In terms of biological role, probable ATP-binding RNA helicase which plays a central role during gametogenesis by repressing transposable elements and preventing their mobilization, which is essential for the germline integrity. Acts via the piRNA metabolic process, which mediates the repression of transposable elements during meiosis by forming complexes composed of piRNAs and Piwi proteins and govern the methylation and subsequent repression of transposons. This is Probable ATP-dependent RNA helicase spindle-E (spn-E) from Anopheles gambiae (African malaria mosquito).